Here is a 553-residue protein sequence, read N- to C-terminus: Arginine--tRNA ligase (553 aa).

A 'HIGH' region motif is present at residues 132–140; that stretch reads PTGDLHIGH.

The protein belongs to the class-I aminoacyl-tRNA synthetase family. Monomer.

The protein resides in the cytoplasm. The enzyme catalyses tRNA(Arg) + L-arginine + ATP = L-arginyl-tRNA(Arg) + AMP + diphosphate. This chain is Arginine--tRNA ligase, found in Staphylococcus aureus (strain N315).